Consider the following 506-residue polypeptide: Cobyric acid synthase (506 aa).

The region spanning 251–448 (DITIAIVQLP…LHGLFDSDAF (198 aa)) is the GATase cobBQ-type domain. Catalysis depends on Cys-332, which acts as the Nucleophile. The active site involves His-440.

It belongs to the CobB/CobQ family. CobQ subfamily.

It functions in the pathway cofactor biosynthesis; adenosylcobalamin biosynthesis. Catalyzes amidations at positions B, D, E, and G on adenosylcobyrinic A,C-diamide. NH(2) groups are provided by glutamine, and one molecule of ATP is hydrogenolyzed for each amidation. This is Cobyric acid synthase from Salmonella heidelberg (strain SL476).